The following is a 198-amino-acid chain: Recombination protein RecR (198 aa).

The C4-type zinc finger occupies 56–71 (CGVCGNVDTSNPCGIC). A Toprim domain is found at 79–174 (RSICVVEEVA…RVTQLAHGLP (96 aa)).

Belongs to the RecR family.

Its function is as follows. May play a role in DNA repair. It seems to be involved in an RecBC-independent recombinational process of DNA repair. It may act with RecF and RecO. This chain is Recombination protein RecR, found in Novosphingobium aromaticivorans (strain ATCC 700278 / DSM 12444 / CCUG 56034 / CIP 105152 / NBRC 16084 / F199).